The chain runs to 377 residues: Geranylgeranyl transferase type-1 subunit beta (377 aa).

4 PFTB repeats span residues 144–186 (KEAC…YMLN), 193–234 (MKKA…CLMG), 245–284 (LNRI…KLLK), and 291–333 (FEKN…SLME). Residues 219 to 221 (HGG) and 263 to 266 (RPNK) each bind geranylgeranyl diphosphate. Residues Asp269 and Cys271 each contribute to the Zn(2+) site. 272–275 (YSFW) contributes to the geranylgeranyl diphosphate binding site. His321 serves as a coordination point for Zn(2+).

This sequence belongs to the protein prenyltransferase subunit beta family. As to quaternary structure, heterodimer of FNTA and PGGT1B. PGGT1B mediates interaction with substrate peptides. The cofactor is Zn(2+). It depends on Mg(2+) as a cofactor.

The catalysed reaction is geranylgeranyl diphosphate + L-cysteinyl-[protein] = S-geranylgeranyl-L-cysteinyl-[protein] + diphosphate. Catalyzes the transfer of a geranylgeranyl moiety from geranylgeranyl diphosphate to a cysteine at the fourth position from the C-terminus of proteins with the C-terminal sequence Cys-aliphatic-aliphatic-X. Known substrates include RAC1, RAC2, RAP1A and RAP1B. The polypeptide is Geranylgeranyl transferase type-1 subunit beta (Pggt1b) (Rattus norvegicus (Rat)).